A 103-amino-acid polypeptide reads, in one-letter code: Probable pterin-4-alpha-carbinolamine dehydratase (103 aa).

It belongs to the pterin-4-alpha-carbinolamine dehydratase family.

It catalyses the reaction (4aS,6R)-4a-hydroxy-L-erythro-5,6,7,8-tetrahydrobiopterin = (6R)-L-erythro-6,7-dihydrobiopterin + H2O. In terms of biological role, involved in tetrahydrobiopterin biosynthesis. This chain is Probable pterin-4-alpha-carbinolamine dehydratase (Pcd), found in Hypsibius exemplaris (Freshwater tardigrade).